Here is a 91-residue protein sequence, read N- to C-terminus: Small ribosomal subunit protein uS19 (91 aa).

Belongs to the universal ribosomal protein uS19 family.

Its function is as follows. Protein S19 forms a complex with S13 that binds strongly to the 16S ribosomal RNA. The chain is Small ribosomal subunit protein uS19 from Synechococcus sp. (strain CC9311).